The chain runs to 474 residues: 4-O-methyl-glucuronoyl methylesterase (474 aa).

The N-terminal stretch at 1-17 (MFKPSFVALALVSYATA) is a signal peptide. The region spanning 19–55 (ASAPQWGQCGGIGWTGPTACPSGWACQQLNAYYSQCL) is the CBM1 domain. The segment at 61-91 (APARTTAAPPPPPATTAAPPPPTTSAPTGSS) is disordered. The span at 68-84 (APPPPPATTAAPPPPTT) shows a compositional bias: pro residues. Asparagine 120 is a glycosylation site (N-linked (GlcNAc...) asparagine). Residues 284-289 (GCSRDG) carry the GXSYXG catalytic site motif motif. Intrachain disulfides connect cysteine 285-cysteine 421 and cysteine 317-cysteine 393. Serine 286 functions as the Nucleophile in the catalytic mechanism. Lysine 290, glutamine 332, glutamate 340, and tryptophan 384 together coordinate substrate. The active-site Proton donor/acceptor is histidine 420.

It belongs to the carbohydrate esterase 15 (CE15) family. Post-translationally, N-glycosylated.

Its subcellular location is the secreted. It catalyses the reaction a 4-O-methyl-alpha-D-glucuronosyl ester derivative + H2O = 4-O-methyl-alpha-D-glucuronate derivative + an alcohol + H(+). Functionally, glucuronoyl esterase which may play a significant role in biomass degradation, as it is considered to disconnect hemicellulose from lignin through the hydrolysis of the ester bond between 4-O-methyl-D-glucuronic acid residues of glucuronoxylans and aromatic alcohols of lignin. The chain is 4-O-methyl-glucuronoyl methylesterase from Cerrena unicolor (Canker rot fungus).